Reading from the N-terminus, the 205-residue chain is Urease accessory protein UreG (205 aa).

GTP is bound at residue 14–21; that stretch reads GPVGSGKT.

The protein belongs to the SIMIBI class G3E GTPase family. UreG subfamily. As to quaternary structure, homodimer. UreD, UreF and UreG form a complex that acts as a GTP-hydrolysis-dependent molecular chaperone, activating the urease apoprotein by helping to assemble the nickel containing metallocenter of UreC. The UreE protein probably delivers the nickel.

The protein localises to the cytoplasm. Its function is as follows. Facilitates the functional incorporation of the urease nickel metallocenter. This process requires GTP hydrolysis, probably effectuated by UreG. The polypeptide is Urease accessory protein UreG (Escherichia coli).